The primary structure comprises 258 residues: Regulatory protein RecX (258 aa).

The protein belongs to the RecX family.

Its subcellular location is the cytoplasm. In terms of biological role, modulates RecA activity. The sequence is that of Regulatory protein RecX from Streptococcus sanguinis (strain SK36).